The sequence spans 371 residues: Histidinol-phosphate aminotransferase (371 aa).

Lys228 is subject to N6-(pyridoxal phosphate)lysine.

Belongs to the class-II pyridoxal-phosphate-dependent aminotransferase family. Histidinol-phosphate aminotransferase subfamily. Pyridoxal 5'-phosphate serves as cofactor.

The catalysed reaction is L-histidinol phosphate + 2-oxoglutarate = 3-(imidazol-4-yl)-2-oxopropyl phosphate + L-glutamate. It participates in amino-acid biosynthesis; L-histidine biosynthesis; L-histidine from 5-phospho-alpha-D-ribose 1-diphosphate: step 7/9. This chain is Histidinol-phosphate aminotransferase, found in Methanococcus aeolicus (strain ATCC BAA-1280 / DSM 17508 / OCM 812 / Nankai-3).